The following is a 404-amino-acid chain: MKIVGAEVFVTCPGRNFVTLKITTDDGLVGLGDATLNGRELSVASYLKDHLCPQLIGRDAHRIEDIWQFFYKGAYWRRGPVTMSAISAVDMALWDIKAKAAGMPLYQLLGGASREGVMVYCHTTGHTIDDVLEDYARHKEMGFKAIRVQCGVPGMKTTYGMSKGKGLAYEPATKGDWPEEQLWSTEKYLDFTPKLFDAVRSKFGYDEHLLHDMHHRLTPIEAARFGKSIEEFRLFWMEDPTPAENQECFRLIRQHTVTPIAVGEVFNSIWDCKQLIEEQLIDYIRTTMTHAGGITGMRRIADFASLYQVRTGSHGPSDLSPICHAAALHFDLWVPNFGVQEYMGYSEQMLEVFPHSWTFDNGYMHPGEKPGLGIEFDEKLAAKYPYDPAYLPVARLEDGTLWNW.

Substrate contacts are provided by N37 and H122. Residue Y159 is the Proton donor/acceptor of the active site. D212 contributes to the Mg(2+) binding site. The active-site Proton donor/acceptor is H214. Mg(2+) contacts are provided by E238 and E264. Substrate-binding residues include E264, R285, H314, D318, and E341.

This sequence belongs to the mandelate racemase/muconate lactonizing enzyme family. GalD subfamily. It depends on Mg(2+) as a cofactor.

It carries out the reaction D-mannonate = 2-dehydro-3-deoxy-D-gluconate + H2O. Functionally, has low D-mannonate dehydratase activity (in vitro), suggesting that this is not a physiological substrate and that it has no significant role in D-mannonate degradation in vivo. Has no detectable activity with a panel of 70 other acid sugars (in vitro). This is D-galactonate dehydratase family member Ent638_1932 from Enterobacter sp. (strain 638).